Consider the following 103-residue polypeptide: uncharacterized protein (103 aa).

Residues 35–57 (PFVSMFQTFLEVLTATVLAFTAY) traverse the membrane as a helical segment.

It is found in the host membrane. This is an uncharacterized protein from Acidianus bottle-shaped virus (isolate Italy/Pozzuoli) (ABV).